The following is a 405-amino-acid chain: Interferon alpha/beta receptor 1a (405 aa).

An N-terminal signal peptide occupies residues 1 to 20; the sequence is MKVGFALVLLWSLPITNVLA. Over 21–233 the chain is Extracellular; sequence ELPQPQNLTL…QTEGDTPYGQ (213 aa). 2 Fibronectin type-III domains span residues 22-123 and 126-228; these read LPQP…IDAS and PPSR…TEGD. 2 N-linked (GlcNAc...) asparagine glycosylation sites follow: Asn-27 and Asn-70. Cystine bridges form between Cys-75-Cys-83 and Cys-201-Cys-222. Asn-212 carries an N-linked (GlcNAc...) asparagine glycan. Residues 234–254 form a helical membrane-spanning segment; it reads IFLYFLVSMMVCFLLVLLSSY. The Cytoplasmic portion of the chain corresponds to 255–405; sequence AFFRFYRGLK…LDEGVVDICV (151 aa). Residues 325–374 form a disordered region; that stretch reads TAPPSELEQDSGRRIRQDSGDSGIYSTEGGSAQQGRSGGEPIRRDQEVDS. The segment covering 334-343 has biased composition (basic and acidic residues); it reads DSGRRIRQDS. Polar residues predominate over residues 348–359; that stretch reads IYSTEGGSAQQG.

Belongs to the type II cytokine receptor family. Heterodimer with IFNAR2; forming the receptor for type I interferon.

It localises to the cell membrane. In terms of biological role, together with IFNAR2, forms the heterodimeric receptor for type I interferons (including interferons alpha, beta, epsilon, omega and kappa). Type I interferon binding activates the JAK-STAT signaling cascade, resulting in transcriptional activation or repression of interferon-regulated genes that encode the effectors of the interferon response. Mechanistically, type I interferon-binding brings the IFNAR1 and IFNAR2 subunits into close proximity with one another, driving their associated Janus kinases (JAKs) (TYK2 bound to IFNAR1 and JAK1 bound to IFNAR2) to cross-phosphorylate one another. The activated kinases phosphorylate specific tyrosine residues on the intracellular domains of IFNAR1 and IFNAR2, forming docking sites for the STAT transcription factors. STAT proteins are then phosphorylated by the JAKs, promoting their translocation into the nucleus to regulate expression of interferon-regulated genes. The sequence is that of Interferon alpha/beta receptor 1a from Oncorhynchus mykiss (Rainbow trout).